Here is a 497-residue protein sequence, read N- to C-terminus: Acetyltransferase FGR3 (497 aa).

Ca(2+) contacts are provided by D221 and I224. Residues K255 and D303 each coordinate CoA. Residue D386 coordinates Ca(2+). T396 serves as a coordination point for CoA. A Ca(2+)-binding site is contributed by D462. Positions D477–S497 are disordered. Positions N485–S497 are enriched in low complexity.

The protein belongs to the trichothecene 3-O-acetyltransferase family.

Its pathway is secondary metabolite biosynthesis. Functionally, acetyltransferase; part of the gene cluster that mediates the biosynthesis of the tetraketides fugralins such as linear fugralin A and cyclic fugralin B, volatile compounds that play a role in the asexual reproductive cycle but are not involved in pathogenicity. One of the key features of fugralins is the presence of a double methyl group, which is only rarely encountered in fungal secondary metabolites. As the fugralins cluster does not contain an independent methyltransferase, the PKS FGR1 is probably responsible for adding two methyl groups to the same carbon atom. Fugralin B is similar to fugralin A except for a cyclization between the carboxylic acid C-8 and the alcohol on C-4 resulting in a six membered lactone ring, probably catalyzed by the cyclase FGR4. The exact role of the individual cluster genes remains unknown and further work is needed to unravel the biosynthetic pathway. The protein is Acetyltransferase FGR3 of Gibberella zeae (strain ATCC MYA-4620 / CBS 123657 / FGSC 9075 / NRRL 31084 / PH-1) (Wheat head blight fungus).